Reading from the N-terminus, the 218-residue chain is Very-long-chain (3R)-3-hydroxyacyl-CoA dehydratase (218 aa).

The Cytoplasmic portion of the chain corresponds to 1-6 (MKTYLS). Residues 7 to 29 (IYYLIQFCGHSWIFTNMTTRFLF) traverse the membrane as a helical segment. Over 30 to 38 (FGQDAFADT) the chain is Lumenal. The helical transmembrane segment at 39 to 61 (FYSIGLVMQGCQLLSILELAHIL) threads the bilayer. Residues 62–67 (LGVEQN) are Cytoplasmic-facing. The chain crosses the membrane as a helical span at residues 68-87 (GFLPMFLQVAERFIILFVVI). Topologically, residues 88 to 96 (TSQEEVQSK) are lumenal. Residues 97-116 (YIVCALFFIWNLWDVIRYPY) form a helical membrane-spanning segment. The Cytoplasmic segment spans residues 117–136 (DMLAAVDTDYSALTWLRHTW). Residues 137–159 (WIVAYPLSVLAEAYTIYESLPYF) form a helical membrane-spanning segment. Active-site residues include Tyr141 and Glu148. The Lumenal portion of the chain corresponds to 160–178 (ESLGTYSFKMALPVSLSFH). The helical transmembrane segment at 179-201 (FPYILTLYLVLQPVGMLYICSCL) threads the bilayer. Over 202 to 218 (WSERKQYFQRKLKLKKN) the chain is Cytoplasmic.

Belongs to the very long-chain fatty acids dehydratase HACD family.

It is found in the endoplasmic reticulum membrane. It carries out the reaction a very-long-chain (3R)-3-hydroxyacyl-CoA = a very-long-chain (2E)-enoyl-CoA + H2O. The enzyme catalyses (3R)-hydroxyhexadecanoyl-CoA = (2E)-hexadecenoyl-CoA + H2O. It participates in lipid metabolism; fatty acid biosynthesis. Catalyzes the third of the four reactions of the long-chain fatty acids elongation cycle. This endoplasmic reticulum-bound enzymatic process, allows the addition of two carbons to the chain of long- and very long-chain fatty acids/VLCFAs per cycle. This enzyme catalyzes the dehydration of the 3-hydroxyacyl-CoA intermediate into trans-2,3-enoyl-CoA, within each cycle of fatty acid elongation. Thereby, it participates in the production of VLCFAs of different chain lengths that are involved in multiple biological processes as precursors of membrane lipids and lipid mediators. This Xenopus laevis (African clawed frog) protein is Very-long-chain (3R)-3-hydroxyacyl-CoA dehydratase.